Reading from the N-terminus, the 314-residue chain is Protein EXORDIUM (314 aa).

An N-terminal signal peptide occupies residues 1-21 (MYLLVFKLFLFLSLLQISVSA).

The protein belongs to the EXORDIUM family. In terms of tissue distribution, expressed in root tips, vascular tissue of roots, shoot apex, rosette leaves and embryos.

The protein resides in the secreted. It localises to the extracellular space. Its subcellular location is the apoplast. Required for cell expansion in leaves. May mediate brassinosteroid (BR)-induced leaf growth. May play a role in the control of BR responses in roots. May be involved in signaling processes that coordinate BR responses with environmental or developmental signals. The polypeptide is Protein EXORDIUM (EXO) (Arabidopsis thaliana (Mouse-ear cress)).